Here is a 1042-residue protein sequence, read N- to C-terminus: Isoleucine--tRNA ligase (1042 aa).

The 'HIGH' region motif lies at 48–58; it reads PFATGLPHFGH. Positions 594–598 match the 'KMSKS' region motif; it reads KMSKS. Residue lysine 597 participates in ATP binding.

Belongs to the class-I aminoacyl-tRNA synthetase family. IleS type 2 subfamily. As to quaternary structure, monomer. Requires Zn(2+) as cofactor.

The protein localises to the cytoplasm. It catalyses the reaction tRNA(Ile) + L-isoleucine + ATP = L-isoleucyl-tRNA(Ile) + AMP + diphosphate. Its function is as follows. Catalyzes the attachment of isoleucine to tRNA(Ile). As IleRS can inadvertently accommodate and process structurally similar amino acids such as valine, to avoid such errors it has two additional distinct tRNA(Ile)-dependent editing activities. One activity is designated as 'pretransfer' editing and involves the hydrolysis of activated Val-AMP. The other activity is designated 'posttransfer' editing and involves deacylation of mischarged Val-tRNA(Ile). The chain is Isoleucine--tRNA ligase from Borrelia garinii subsp. bavariensis (strain ATCC BAA-2496 / DSM 23469 / PBi) (Borreliella bavariensis).